A 181-amino-acid polypeptide reads, in one-letter code: ATP-dependent protease subunit HslV (181 aa).

Thr7 is an active-site residue. Residues Ala165, Cys168, and Thr171 each coordinate Na(+).

This sequence belongs to the peptidase T1B family. HslV subfamily. A double ring-shaped homohexamer of HslV is capped on each side by a ring-shaped HslU homohexamer. The assembly of the HslU/HslV complex is dependent on binding of ATP.

It is found in the cytoplasm. It catalyses the reaction ATP-dependent cleavage of peptide bonds with broad specificity.. With respect to regulation, allosterically activated by HslU binding. Its function is as follows. Protease subunit of a proteasome-like degradation complex believed to be a general protein degrading machinery. This chain is ATP-dependent protease subunit HslV, found in Lysinibacillus sphaericus (strain C3-41).